A 35-amino-acid polypeptide reads, in one-letter code: FNPVGVAFKGNNGKYLSRIHRSGIDYTEFAKDNTD.

In terms of tissue distribution, expressed in tentacles.

Its subcellular location is the nematocyst. It localises to the secreted. Peptide with unknown function. Does not exhibit antimicrobial activity against Escherichia coli and Staphylococcus aureus. In Heliofungia actiniformis (Mushroom coral), this protein is Peptide Hact-3.